A 165-amino-acid polypeptide reads, in one-letter code: Small ribosomal subunit protein uS5 (165 aa).

The 64-residue stretch at 13–76 (LEEKVLVVNR…EAAKKNLMKI (64 aa)) folds into the S5 DRBM domain.

This sequence belongs to the universal ribosomal protein uS5 family. As to quaternary structure, part of the 30S ribosomal subunit. Contacts proteins S4 and S8.

Functionally, with S4 and S12 plays an important role in translational accuracy. Located at the back of the 30S subunit body where it stabilizes the conformation of the head with respect to the body. The chain is Small ribosomal subunit protein uS5 from Chlamydia pneumoniae (Chlamydophila pneumoniae).